A 279-amino-acid polypeptide reads, in one-letter code: Tryptophan 2,3-dioxygenase (279 aa).

Residues 48-52, tyrosine 110, and arginine 114 contribute to the substrate site; that span reads FIVIH. Heme is bound at residue histidine 237. Threonine 251 is a binding site for substrate.

Belongs to the tryptophan 2,3-dioxygenase family. In terms of assembly, homotetramer. The cofactor is heme.

It catalyses the reaction L-tryptophan + O2 = N-formyl-L-kynurenine. The protein operates within amino-acid degradation; L-tryptophan degradation via kynurenine pathway; L-kynurenine from L-tryptophan: step 1/2. Its function is as follows. Heme-dependent dioxygenase that catalyzes the oxidative cleavage of the L-tryptophan (L-Trp) pyrrole ring and converts L-tryptophan to N-formyl-L-kynurenine. Catalyzes the oxidative cleavage of the indole moiety. The chain is Tryptophan 2,3-dioxygenase from Bacillus thuringiensis subsp. konkukian (strain 97-27).